Consider the following 696-residue polypeptide: MIKWGLFGAVKPFRSMVPLSQTRSLIISKSSLVRSKRVSTIRPQLAPVNPYSKIYGRRFFSSSHKLGVNTKEDSSTYLFGRKISTSESKMLKSLLVTIWPKNKPSFKLRVIFALSLLIASKLLNVEVPFFFKKIIDEMNVDWNDQLGTVGTVIGTLIIAYGGARFGAVLFGELRNAVFASVAQTAIKRVAHNTFVHLLNMDLNFHLSRQTGGLTRAIDRGTKGISYVLNAMVFHIIPISFEISMVCGILIYNYGLSFAAVTLATMLSYSVFTIKTTAWRTGFRRQANNADNQAATVALDSLLNYESVKYFNNEGFQASKYNTALTNYQNASVKVATSLAYLNAGQNFIFTSALTAMMYMGCNGVATGSLTVGDLVLINQLVFQLSVPLSFLGSVYRELKQSLLDMENLFQLQNHEIKIKDASNAKPLLLNSTGVPGEIKFENVTFGYHPDRPILQNASFTIPAGEKIAIVGPSGSGKSTILRLIFRFYDVESGKIFIDGQDISKVTVESLRRSIGIVPQDTPLFNDTILENIRYGRLDATDKEIHEMIDKVQLTKLIEDSPNGVNTIVGERGMMISGGEKQRLAIARLLLKRAPITLFDEATSALDTHTEQSLLRTIRKVLTKKANTHIAIAHRLRTIADADKIIVLNKGQVQEEGTHHNLLQNPNSLYSQLWNIQENLDIDEELNEYAKETEEQK.

Residues 1–67 (MIKWGLFGAV…RFFSSSHKLG (67 aa)) constitute a mitochondrion transit peptide. The Mitochondrial matrix segment spans residues 68–109 (VNTKEDSSTYLFGRKISTSESKMLKSLLVTIWPKNKPSFKLR). A helical membrane pass occupies residues 110–131 (VIFALSLLIASKLLNVEVPFFF). The region spanning 110-400 (VIFALSLLIA…LGSVYRELKQ (291 aa)) is the ABC transmembrane type-1 domain. At 132 to 154 (KKIIDEMNVDWNDQLGTVGTVIG) the chain is on the mitochondrial intermembrane side. Residues 155 to 178 (TLIIAYGGARFGAVLFGELRNAVF) form a helical membrane-spanning segment. Residues 179 to 227 (ASVAQTAIKRVAHNTFVHLLNMDLNFHLSRQTGGLTRAIDRGTKGISYV) lie on the Mitochondrial matrix side of the membrane. The chain crosses the membrane as a helical span at residues 228–251 (LNAMVFHIIPISFEISMVCGILIY). Asparagine 252 is a topological domain (mitochondrial intermembrane). A helical membrane pass occupies residues 253–273 (YGLSFAAVTLATMLSYSVFTI). Over 274–339 (KTTAWRTGFR…ASVKVATSLA (66 aa)) the chain is Mitochondrial matrix. Residues 279–283 (RTGFR) and 342–345 (NAGQ) each bind glutathione. The chain crosses the membrane as a helical span at residues 340–358 (YLNAGQNFIFTSALTAMMY). The Mitochondrial intermembrane segment spans residues 359-373 (MGCNGVATGSLTVGD). A helical transmembrane segment spans residues 374–395 (LVLINQLVFQLSVPLSFLGSVY). Position 392 (glycine 392) interacts with glutathione. The Mitochondrial matrix portion of the chain corresponds to 396 to 696 (RELKQSLLDM…EYAKETEEQK (301 aa)). The 237-residue stretch at 438 to 674 (IKFENVTFGY…PNSLYSQLWN (237 aa)) folds into the ABC transporter domain. Residues tyrosine 447 and 471–482 (GPSGSGKSTILR) each bind ATP.

The protein belongs to the ABC transporter superfamily. ABCB family. Heavy Metal importer (TC 3.A.1.210) subfamily. As to quaternary structure, homodimer.

The protein localises to the mitochondrion inner membrane. Performs an essential function in the generation of cytoplasmic iron-sulfur proteins by mediating the ATP-dependent export of Fe/S cluster precursors synthesized by NFS1 and other mitochondrial proteins. Hydrolyzes ATP. Binds glutathione and may function by transporting a glutathione-conjugated iron-sulfur compound. The chain is Iron-sulfur clusters transporter ATM1, mitochondrial from Debaryomyces hansenii (strain ATCC 36239 / CBS 767 / BCRC 21394 / JCM 1990 / NBRC 0083 / IGC 2968) (Yeast).